Consider the following 159-residue polypeptide: Ribosome-binding factor A (159 aa).

2 stretches are compositionally biased toward basic and acidic residues: residues 118–128 (AADDEVAKARE) and 137–146 (DPYKEPRVAS). The tract at residues 118 to 159 (AADDEVAKARENAQPAGDADPYKEPRVASDEDEASPDVREAD) is disordered.

It belongs to the RbfA family. In terms of assembly, monomer. Binds 30S ribosomal subunits, but not 50S ribosomal subunits or 70S ribosomes.

It localises to the cytoplasm. In terms of biological role, one of several proteins that assist in the late maturation steps of the functional core of the 30S ribosomal subunit. Associates with free 30S ribosomal subunits (but not with 30S subunits that are part of 70S ribosomes or polysomes). Required for efficient processing of 16S rRNA. May interact with the 5'-terminal helix region of 16S rRNA. This chain is Ribosome-binding factor A, found in Rhodococcus erythropolis (strain PR4 / NBRC 100887).